Consider the following 468-residue polypeptide: Glutamine synthetase (468 aa).

In terms of domain architecture, GS beta-grasp spans His11–Thr96. Residues Pro104–Cys468 enclose the GS catalytic domain. Mg(2+) contacts are provided by Glu129 and Glu131. Glu207 contacts ATP. Mg(2+) is bound by residues Glu212 and Glu220. Residues Asn264–Gly265 and Gly265 contribute to the L-glutamate site. His269 provides a ligand contact to Mg(2+). ATP-binding positions include His271 to Ser273 and Ser273. 3 residues coordinate L-glutamate: Arg321, Glu327, and Arg339. Residues Arg339, Arg344, and Arg352 each contribute to the ATP site. Glu357 is a Mg(2+) binding site. Arg359 is a binding site for L-glutamate. An O-AMP-tyrosine modification is found at Tyr397.

This sequence belongs to the glutamine synthetase family. Oligomer of 12 subunits arranged in the form of two hexagons. Mg(2+) is required as a cofactor. Requires Mn(2+) as cofactor.

The enzyme catalyses L-glutamate + NH4(+) + ATP = L-glutamine + ADP + phosphate + H(+). With respect to regulation, when cellular nitrogen levels are high, the C-terminal adenylyl transferase (AT) of GlnE inhibits GlnA by covalent transfer of an adenylyl group from ATP to Tyr-397. Conversely, when nitrogen levels are low, the N-terminal adenylyl removase (AR) of GlnE activates GlnA by removing the adenylyl group by phosphorolysis. The fully adenylated enzyme complex is inactive. Catalyzes the formation of glutamine from glutamate and ammonia. In vitro, can also use hydroxylamine, methylamine and ethylamine, with 32%, 7% and 1% activity compared to ammonia, respectively. The protein is Glutamine synthetase of Pseudomonas taetrolens.